An 830-amino-acid polypeptide reads, in one-letter code: AdoMet-dependent rRNA methyltransferase SPB1 (830 aa).

S-adenosyl-L-methionine-binding residues include Gly-58, Trp-60, Asp-78, Asp-94, and Asp-119. The Proton acceptor role is filled by Lys-159. Residues 345–388 are a coiled coil; sequence LTEEEQIEKELQEMQQKQNLKKKREKRKQNEIKQKEITRMQMQM. 2 disordered regions span residues 485-529 and 565-642; these read AKEA…SDSD and EADL…AREV. Acidic residues-rich tracts occupy residues 516–529, 591–610, and 618–630; these read VDDD…SDSD, VSEE…DSDF, and DESD…EDEA. A compositionally biased stretch (basic and acidic residues) spans 631 to 642; that stretch reads ERSQKEKHAREV.

Belongs to the class I-like SAM-binding methyltransferase superfamily. RNA methyltransferase RlmE family. SPB1 subfamily. Component of the nucleolar and nucleoplasmic pre-60S ribosomal particle.

The protein resides in the nucleus. It localises to the nucleolus. It carries out the reaction a ribonucleotide in rRNA + S-adenosyl-L-methionine = a 2'-O-methylribonucleotide in rRNA + S-adenosyl-L-homocysteine + H(+). Functionally, required for proper assembly of pre-ribosomal particles during the biogenesis of the 60S ribosomal subunit. This chain is AdoMet-dependent rRNA methyltransferase SPB1, found in Eremothecium gossypii (strain ATCC 10895 / CBS 109.51 / FGSC 9923 / NRRL Y-1056) (Yeast).